We begin with the raw amino-acid sequence, 298 residues long: uncharacterized protein (298 aa).

Transmembrane regions (helical) follow at residues 9–28 (GYVLGLTAYVIWGLFPLYFK), 38–60 (IIVQRAVWSALFGAVLLLFWKHP), 72–94 (RFVVLAASGLLIASNWMTYVWAV), 104–121 (LGYYINPLINVMLGMLLL), 128–145 (LQWLAVALASLGVAQQVW), 150–167 (LPWVSLVLALTFGFYGLI), 174–196 (AALPGLVVETWLLLPLALVWLLF), 211–233 (PEALWVVAAGPVTLVPLVCFNAA), 240–262 (ATLGFLQYLAPTLVLLQAILLFG), and 272–291 (AFAFIWLALAVYSFDAWRSL). Positions 18–141 (VIWGLFPLYF…AVALASLGVA (124 aa)) constitute an EamA domain.

The protein belongs to the EamA transporter family.

The protein resides in the cell membrane. This is an uncharacterized protein from Pseudomonas aeruginosa (strain ATCC 15692 / DSM 22644 / CIP 104116 / JCM 14847 / LMG 12228 / 1C / PRS 101 / PAO1).